The following is a 475-amino-acid chain: AAA-ATPase At1g43910 (475 aa).

A helical membrane pass occupies residues 11-28 (VSAVFSLYTSFSAITMLF). Threonine 85 carries the post-translational modification Phosphothreonine. 246 to 253 (GPPGTGKS) is a binding site for ATP. 2 disordered regions span residues 306–328 (SRRRQSKKKEEDGGEDDGEPQKR) and 453–475 (KGEDSSVEEEGEIEDAETKEAET). Positions 457-467 (SSVEEEGEIED) are enriched in acidic residues.

This sequence belongs to the AAA ATPase family. BCS1 subfamily. Mg(2+) serves as cofactor. Expressed in developing shoots.

The protein localises to the membrane. It catalyses the reaction ATP + H2O = ADP + phosphate + H(+). The protein is AAA-ATPase At1g43910 of Arabidopsis thaliana (Mouse-ear cress).